The chain runs to 689 residues: Glycine--tRNA ligase beta subunit (689 aa).

It belongs to the class-II aminoacyl-tRNA synthetase family. As to quaternary structure, tetramer of two alpha and two beta subunits.

It is found in the cytoplasm. The enzyme catalyses tRNA(Gly) + glycine + ATP = glycyl-tRNA(Gly) + AMP + diphosphate. The protein is Glycine--tRNA ligase beta subunit of Acinetobacter baumannii (strain AB307-0294).